We begin with the raw amino-acid sequence, 593 residues long: Developmental and secondary metabolism regulator VEL1 (593 aa).

The segment covering 1-16 has biased composition (polar residues); sequence MSNIVVSNETKSQSVR. The tract at residues 1–21 is disordered; that stretch reads MSNIVVSNETKSQSVRTTKDG. A Velvet domain is found at 21-212; that stretch reads GRQIRYNLQV…AEQGCRVRIR (192 aa). A Nuclear localization signal motif is present at residues 35–40; sequence ERARAC. The tract at residues 218–569 is disordered; that stretch reads RRRENKSSKE…PGSPDMEEPM (352 aa). Positions 310–326 are enriched in low complexity; it reads PSYGSNQPQYSQQYQTP. Residues 327-340 show a composition bias toward pro residues; it reads QPAPMMQPPQPPQH. 2 stretches are compositionally biased toward low complexity: residues 341–360 and 367–389; these read STPY…HQAQ and QQYG…QPQY. Polar residues-rich tracts occupy residues 413 to 429 and 440 to 449; these read SSIT…SSHP and GRSQQMSQPL. The tract at residues 443-487 is PEST; sequence QQMSQPLHSSPQSYASSAPSHQSLPSLRPIVADKLEPVSPSYQSP. Positions 450-465 are enriched in low complexity; that stretch reads HSSPQSYASSAPSHQS. Polar residues-rich tracts occupy residues 482-505 and 512-534; these read PSYQ…SNQH and NPQT…SSTF.

The protein belongs to the velvet family. VeA subfamily. As to quaternary structure, component of the heterotrimeric velvet complex composed of LAE1, VEL1 and VEL2; VEL1 acting as a bridging protein between LAE1 and VEL2.

It is found in the nucleus. It localises to the cytoplasm. Its function is as follows. Component of the velvet transcription factor complex that controls sexual/asexual developmental ratio in response to light, promoting sexual development in the darkness while stimulating asexual sporulation under illumination. The velvet complex acts as a global regulator for secondary metabolite gene expression. Controls the expression of the T-toxin gene cluster. Promotes oxidative stress tolerance and acts as a virulence factors during infection. Negatively regulate mycelial pigmentation and controls sexual development, as well as asexual development during vegetative growth. This chain is Developmental and secondary metabolism regulator VEL1, found in Cochliobolus heterostrophus (strain C5 / ATCC 48332 / race O) (Southern corn leaf blight fungus).